Reading from the N-terminus, the 101-residue chain is HssA/B-like protein 40 (101 aa).

The segment at 1 to 26 (MTLFSSISSMSTSMSGSKSSISSFGS) is disordered.

The protein belongs to the hssA/B family.

In Dictyostelium discoideum (Social amoeba), this protein is HssA/B-like protein 40 (hssl40).